The sequence spans 397 residues: Argininosuccinate synthase (397 aa).

ATP is bound at residue 8–16 (AYSGGLDTS). Tyr87 lines the L-citrulline pocket. Gly117 lines the ATP pocket. 3 residues coordinate L-aspartate: Thr119, Asn123, and Asp124. Residue Asn123 participates in L-citrulline binding. Arg127, Ser175, Glu259, and Tyr271 together coordinate L-citrulline.

It belongs to the argininosuccinate synthase family. Type 1 subfamily. As to quaternary structure, homotetramer.

The protein resides in the cytoplasm. It catalyses the reaction L-citrulline + L-aspartate + ATP = 2-(N(omega)-L-arginino)succinate + AMP + diphosphate + H(+). It functions in the pathway amino-acid biosynthesis; L-arginine biosynthesis; L-arginine from L-ornithine and carbamoyl phosphate: step 2/3. The protein is Argininosuccinate synthase of Streptomyces clavuligerus.